Consider the following 445-residue polypeptide: Probable protein phosphatase 2C 14 (445 aa).

One can recognise a PPM-type phosphatase domain in the interval 120-440 (GFGVVSRNGK…DDITVVIIDL (321 aa)). Positions 156, 157, and 318 each coordinate Mn(2+). A disordered region spans residues 384 to 404 (NSENESPSLNREIGSSPSKSP). Positions 390–404 (PSLNREIGSSPSKSP) are enriched in polar residues. Residue D431 coordinates Mn(2+).

Belongs to the PP2C family. It depends on Mg(2+) as a cofactor. The cofactor is Mn(2+).

It carries out the reaction O-phospho-L-seryl-[protein] + H2O = L-seryl-[protein] + phosphate. It catalyses the reaction O-phospho-L-threonyl-[protein] + H2O = L-threonyl-[protein] + phosphate. The protein is Probable protein phosphatase 2C 14 of Arabidopsis thaliana (Mouse-ear cress).